A 99-amino-acid polypeptide reads, in one-letter code: Transcription and mRNA export factor SUS1 (99 aa).

It belongs to the ENY2 family. Component of the nuclear pore complex (NPC)-associated TREX-2 complex (transcription and export complex 2), composed of at least SUS1, SAC3, THP1, SEM1, and CDC31. TREX-2 contains 2 SUS1 chains. The TREX-2 complex interacts with the nucleoporin NUP1. Component of the 1.8 MDa SAGA transcription coactivator-HAT complex. SAGA is built of 5 distinct domains with specialized functions. Within the SAGA complex, SUS1, SGF11, SGF73 and UBP8 form an additional subcomplex of SAGA called the DUB module (deubiquitination module). Interacts directly with THP1, SAC3, SGF11, and with the RNA polymerase II.

The protein resides in the nucleus. Its subcellular location is the nucleoplasm. It localises to the cytoplasm. The protein localises to the P-body. Functionally, involved in mRNA export coupled transcription activation by association with both the TREX-2 and the SAGA complexes. At the promoters, SAGA is required for recruitment of the basal transcription machinery. It influences RNA polymerase II transcriptional activity through different activities such as TBP interaction and promoter selectivity, interaction with transcription activators, and chromatin modification through histone acetylation and deubiquitination. Within the SAGA complex, participates in a subcomplex required for deubiquitination of H2B and for the maintenance of steady-state H3 methylation levels. The TREX-2 complex functions in docking export-competent ribonucleoprotein particles (mRNPs) to the nuclear entrance of the nuclear pore complex (nuclear basket). TREX-2 participates in mRNA export and accurate chromatin positioning in the nucleus by tethering genes to the nuclear periphery. May also be involved in cytoplasmic mRNA decay by interaction with components of P-bodies. The sequence is that of Transcription and mRNA export factor SUS1 from Eremothecium gossypii (strain ATCC 10895 / CBS 109.51 / FGSC 9923 / NRRL Y-1056) (Yeast).